The chain runs to 83 residues: Small ribosomal subunit protein bS21 (83 aa).

The interval 40–83 is disordered; that stretch reads TPMDERRRKARSASKRNKVKWRYSNKSEETASETAETPASAPEA. Positions 47–62 are enriched in basic residues; sequence RKARSASKRNKVKWRY. Residues 71 to 83 show a composition bias toward low complexity; it reads SETAETPASAPEA.

The protein belongs to the bacterial ribosomal protein bS21 family.

The polypeptide is Small ribosomal subunit protein bS21 (Akkermansia muciniphila (strain ATCC BAA-835 / DSM 22959 / JCM 33894 / BCRC 81048 / CCUG 64013 / CIP 107961 / Muc)).